The sequence spans 184 residues: GTP cyclohydrolase 1 (184 aa).

Zn(2+) is bound by residues C75, H78, and C146.

It belongs to the GTP cyclohydrolase I family. In terms of assembly, homomer.

It catalyses the reaction GTP + H2O = 7,8-dihydroneopterin 3'-triphosphate + formate + H(+). The protein operates within cofactor biosynthesis; 7,8-dihydroneopterin triphosphate biosynthesis; 7,8-dihydroneopterin triphosphate from GTP: step 1/1. In Streptococcus pneumoniae serotype 19F (strain G54), this protein is GTP cyclohydrolase 1.